The following is a 1208-amino-acid chain: Neural cell adhesion molecule L1-like protein (1208 aa).

The N-terminal stretch at 1-24 (MEPLLLGRGLIVYLMFLLLKFSKA) is a signal peptide. Over 25–1082 (IEIPSSVQQV…LYDDISTQGW (1058 aa)) the chain is Extracellular. 2 consecutive Ig-like C2-type domains span residues 35–124 (PTII…EEIE) and 128–223 (PSVP…MKLT). Intrachain disulfides connect cysteine 57-cysteine 109 and cysteine 153-cysteine 204. N-linked (GlcNAc...) asparagine glycosylation is found at lysine 231 and asparagine 299. 4 consecutive Ig-like C2-type domains span residues 235–328 (PKLL…VIVE), 331–417 (PRWT…ANID), 423–510 (PLIQ…ANLD), and 515–607 (TKLR…TQVT). Cystine bridges form between cysteine 262–cysteine 310, cysteine 352–cysteine 401, cysteine 445–cysteine 494, and cysteine 536–cysteine 591. N-linked (GlcNAc...) asparagine glycosylation is found at asparagine 476 and asparagine 482. Positions 555 to 558 (DGEA) match the DGEA motif. N-linked (GlcNAc...) asparagine glycosylation is found at asparagine 562 and asparagine 580. Fibronectin type-III domains follow at residues 614 to 709 (PPEN…TPPA), 714 to 807 (NPQN…SGED), 809 to 914 (PDTA…TPEG), and 918 to 1015 (QPTF…LGEG). A disordered region spans residues 693–716 (GRSQPSQPSDHHETPPAAPDRNPQ). N-linked (GlcNAc...) asparagine glycans are attached at residues asparagine 767, asparagine 822, asparagine 945, and asparagine 1026. A helical membrane pass occupies residues 1083 to 1103 (FIGLMCAIALLTLLLLTVCFV). Residues 1104–1208 (KRNRGGKYSV…SSTATFPLRA (105 aa)) lie on the Cytoplasmic side of the membrane. Residues 1131–1163 (ETFGEYSDSDEKPLKGSLRSLNRDMQPTESADS) form a disordered region. Phosphoserine occurs at positions 1147, 1160, and 1180. Residues 1149–1161 (RSLNRDMQPTESA) are compositionally biased toward polar residues. The FIG[AQ]Y signature appears at 1181-1185 (FIGAY). The segment at 1189–1208 (KEKGSVESNGSSTATFPLRA) is disordered. Residues 1194–1208 (VESNGSSTATFPLRA) are compositionally biased toward polar residues.

The protein belongs to the immunoglobulin superfamily. L1/neurofascin/NgCAM family. As to quaternary structure, may interact with L1CAM. May interact with ITGB1/ITGA1 heterodimer and ITGB1/ITGA2 heterodimer as well as with ANK3. In terms of processing, cleavage by metalloprotease ADAM8 in the extracellular part generates 2 soluble forms (125 kDa and 165 kDa) in vitro and is inhibited by metalloprotease inhibitors. Cleaved by BACE1. Post-translationally, N-glycosylated. Contains N-linked oligosaccharides with a sulfated carbohydrate structure type HNK-1 (SO4-3-GlcUABeta1,3GalBeta1,4GlcNAc). O-glycosylated. In terms of tissue distribution, expressed in the fetal and adult brain as well as in Schwann cell culture. Also detected in adult peripheral tissues.

It localises to the cell membrane. The protein resides in the secreted. Its subcellular location is the extracellular space. It is found in the extracellular matrix. In terms of biological role, extracellular matrix and cell adhesion protein that plays a role in nervous system development and in synaptic plasticity. Both soluble and membranous forms promote neurite outgrowth of cerebellar and hippocampal neurons and suppress neuronal cell death. Plays a role in neuronal positioning of pyramidal neurons and in regulation of both the number of interneurons and the efficacy of GABAergic synapses. May play a role in regulating cell migration in nerve regeneration and cortical development. Potentiates integrin-dependent cell migration towards extracellular matrix proteins. Recruits ANK3 to the plasma membrane. This Homo sapiens (Human) protein is Neural cell adhesion molecule L1-like protein (CHL1).